We begin with the raw amino-acid sequence, 250 residues long: Enoyl-[acyl-carrier-protein] reductase [NADPH] FabL (250 aa).

NADP(+) contacts are provided by residues 13-16, 36-38, 62-63, and Asn89; these read SRGV, ARS, and NV. Catalysis depends on proton acceptor residues Tyr151 and Lys158. Residues Lys158 and 187-189 each bind NADP(+); that span reads IDT.

It belongs to the short-chain dehydrogenases/reductases (SDR) family. Homotetramer.

The catalysed reaction is a 2,3-saturated acyl-[ACP] + NADP(+) = a (2E)-enoyl-[ACP] + NADPH + H(+). The enzyme catalyses (2E)-butenoyl-[ACP] + NADPH + H(+) = butanoyl-[ACP] + NADP(+). It functions in the pathway lipid metabolism; fatty acid biosynthesis. With respect to regulation, inhibited by triclosan. Functionally, catalyzes the reduction of a carbon-carbon double bond in an enoyl moiety that is covalently linked to an acyl carrier protein (ACP). It confers resistance to triclosan. This Bacillus subtilis (strain 168) protein is Enoyl-[acyl-carrier-protein] reductase [NADPH] FabL (fabL).